The chain runs to 166 residues: Phosphopantetheine adenylyltransferase (166 aa).

Position 9 (threonine 9) interacts with substrate. ATP is bound by residues 9–10 (TF) and histidine 17. Residues lysine 41, leucine 73, and arginine 87 each coordinate substrate. Residues 88–90 (GLR), glutamate 98, and 123–129 (YQFISGT) contribute to the ATP site.

It belongs to the bacterial CoaD family. In terms of assembly, homohexamer. It depends on Mg(2+) as a cofactor.

The protein resides in the cytoplasm. The enzyme catalyses (R)-4'-phosphopantetheine + ATP + H(+) = 3'-dephospho-CoA + diphosphate. Its pathway is cofactor biosynthesis; coenzyme A biosynthesis; CoA from (R)-pantothenate: step 4/5. Functionally, reversibly transfers an adenylyl group from ATP to 4'-phosphopantetheine, yielding dephospho-CoA (dPCoA) and pyrophosphate. This is Phosphopantetheine adenylyltransferase from Burkholderia mallei (strain NCTC 10229).